We begin with the raw amino-acid sequence, 475 residues long: tRNA-2-methylthio-N(6)-dimethylallyladenosine synthase (475 aa).

Residues 7–127 (RKLHIKSYGC…LPKLLAKARD (121 aa)) enclose the MTTase N-terminal domain. 6 residues coordinate [4Fe-4S] cluster: Cys16, Cys52, Cys90, Cys168, Cys172, and Cys175. The Radical SAM core domain maps to 154–388 (RARGVSAFVT…AQLQALIDAQ (235 aa)). A TRAM domain is found at 394-456 (RAAIGRTVEV…RYSLKGRLAS (63 aa)).

This sequence belongs to the methylthiotransferase family. MiaB subfamily. Monomer. It depends on [4Fe-4S] cluster as a cofactor.

It is found in the cytoplasm. The catalysed reaction is N(6)-dimethylallyladenosine(37) in tRNA + (sulfur carrier)-SH + AH2 + 2 S-adenosyl-L-methionine = 2-methylsulfanyl-N(6)-dimethylallyladenosine(37) in tRNA + (sulfur carrier)-H + 5'-deoxyadenosine + L-methionine + A + S-adenosyl-L-homocysteine + 2 H(+). Its function is as follows. Catalyzes the methylthiolation of N6-(dimethylallyl)adenosine (i(6)A), leading to the formation of 2-methylthio-N6-(dimethylallyl)adenosine (ms(2)i(6)A) at position 37 in tRNAs that read codons beginning with uridine. This is tRNA-2-methylthio-N(6)-dimethylallyladenosine synthase from Afipia carboxidovorans (strain ATCC 49405 / DSM 1227 / KCTC 32145 / OM5) (Oligotropha carboxidovorans).